Here is a 482-residue protein sequence, read N- to C-terminus: MKFIIKLFPEITIKSQSVRLRFIKILTGNIRNVLKHYDETLAVVRHWDNIEVRAKDENQRLAIRDALTRIPGIHHILEVEDVPFTDMHDIFEKALVQYRDQLEGKTFCVRVKRRGKHDFSSIDVERYVGGGLNQHIESARVKLTNPEVTVHLEVEDDRLLLIKGRYEGIGGFPIGTQEDVLSLISGGFDSGVSSYMLMRRGCRVHYCFFNLGGAAHEIGVRQVAHYLWNRFGSSHRVRFVAINFEPVVGEILEKIDDGQMGVILKRMMVRAASKVAERYGVQALVTGEALGQVSSQTLTNLRLIDNVSDTLILRPLISYDKEHIINLARQIGTEDFARTMPEYCGVISKSPTVKAVKSKIEAEEEKFDFSILDKVVEEVNNVDIREIAQQTEQEVVEVETVNGFGPNDVILDIRSIDEQEDKPLKVEGIDVVSLPFYKLSTKFGDLDQNRTWLLWCERGVMSRLQALYLREQGFNNVKVYRP.

The region spanning 61 to 165 (LAIRDALTRI…DDRLLLIKGR (105 aa)) is the THUMP domain. ATP-binding positions include 183 to 184 (LI), Lys265, Gly287, and Gln296. Cys344 and Cys456 form a disulfide bridge. The region spanning 404-482 (FGPNDVILDI…GFNNVKVYRP (79 aa)) is the Rhodanese domain. Catalysis depends on Cys456, which acts as the Cysteine persulfide intermediate.

This sequence belongs to the ThiI family.

The protein localises to the cytoplasm. It catalyses the reaction [ThiI sulfur-carrier protein]-S-sulfanyl-L-cysteine + a uridine in tRNA + 2 reduced [2Fe-2S]-[ferredoxin] + ATP + H(+) = [ThiI sulfur-carrier protein]-L-cysteine + a 4-thiouridine in tRNA + 2 oxidized [2Fe-2S]-[ferredoxin] + AMP + diphosphate. The enzyme catalyses [ThiS sulfur-carrier protein]-C-terminal Gly-Gly-AMP + S-sulfanyl-L-cysteinyl-[cysteine desulfurase] + AH2 = [ThiS sulfur-carrier protein]-C-terminal-Gly-aminoethanethioate + L-cysteinyl-[cysteine desulfurase] + A + AMP + 2 H(+). It participates in cofactor biosynthesis; thiamine diphosphate biosynthesis. Functionally, catalyzes the ATP-dependent transfer of a sulfur to tRNA to produce 4-thiouridine in position 8 of tRNAs, which functions as a near-UV photosensor. Also catalyzes the transfer of sulfur to the sulfur carrier protein ThiS, forming ThiS-thiocarboxylate. This is a step in the synthesis of thiazole, in the thiamine biosynthesis pathway. The sulfur is donated as persulfide by IscS. The sequence is that of tRNA sulfurtransferase from Escherichia coli O8 (strain IAI1).